We begin with the raw amino-acid sequence, 100 residues long: Large ribosomal subunit protein uL23 (100 aa).

It belongs to the universal ribosomal protein uL23 family. Part of the 50S ribosomal subunit. Contacts protein L29, and trigger factor when it is bound to the ribosome.

In terms of biological role, one of the early assembly proteins it binds 23S rRNA. One of the proteins that surrounds the polypeptide exit tunnel on the outside of the ribosome. Forms the main docking site for trigger factor binding to the ribosome. The polypeptide is Large ribosomal subunit protein uL23 (Xylella fastidiosa (strain 9a5c)).